The following is a 169-amino-acid chain: Biogenesis of lysosome-related organelles complex 1 subunit 4 (169 aa).

The protein belongs to the BLOC1S4 family. Component of the biogenesis of lysosome-related organelles complex-1 (BLOC-1) composed of Blos1, Blos2, Blos3, Blos4, Dysb, Muted, Pldn and Snapin. Interacts with Pldn.

Its function is as follows. Component of the biogenesis of lysosome-related organelles complex-1 (BLOC-1) involved in pigment granule biogenesis. In Drosophila melanogaster (Fruit fly), this protein is Biogenesis of lysosome-related organelles complex 1 subunit 4.